The following is a 440-amino-acid chain: P47(GAG-CRK) protein (440 aa).

The segment at 1–208 (MEAVIKVISS…TPRGAEQPRA (208 aa)) is gag first part. The PPXY motif motif lies at 174-177 (PPPY). The segment at 183 to 230 (YPSLAGVGEQQGQGGDTPRGAEQPRAGRGAGHRGLRRPAGRGQRVRPA) is disordered. The interval 209–437 (GRGAGHRGLR…PSSASVSTLT (229 aa)) is CRK. A compositionally biased stretch (basic residues) spans 212 to 221 (AGHRGLRRPA). The 107-residue stretch at 248 to 354 (WYWGRLSRGD…LDTTTLIEPV (107 aa)) folds into the SH2 domain. The region spanning 368 to 428 (EEVEYVRALF…PVPYVEKCRP (61 aa)) is the SH3 domain. The segment at 438-440 (GGR) is gag second part.

The sequence is that of P47(GAG-CRK) protein from Avian sarcoma virus CT10 (Avian sarcoma virus (strain CT10)).